The primary structure comprises 778 residues: Transcription factor kayak (778 aa).

Composition is skewed to low complexity over residues 24–54 and 77–98; these read AQQL…HTQQ and QYYQ…QRQL. Disordered regions lie at residues 24–57, 76–130, 183–223, 294–320, 356–414, and 427–478; these read AQQL…QNGL, NQYY…HQLR, QPTA…TTNG, APLV…VLAS, ASVM…GTGG, and RNTN…RKRR. Positions 99–108 are enriched in polar residues; it reads PTQQPAASYE. 2 stretches are compositionally biased toward low complexity: residues 109–130 and 183–222; these read QQQQ…HQLR and QPTA…TTTN. Residues 382–402 show a composition bias toward low complexity; it reads ISDTSSGATDSTSYQNGHMMG. Gly residues predominate over residues 403–414; sequence NSGGGNGGGTGG. Residues 427 to 436 show a composition bias toward polar residues; the sequence is RNTNTSNSAT. Residues 457–520 enclose the bZIP domain; sequence EEKRRIRRER…NQLEYFLQAH (64 aa). The segment at 459–478 is basic motif; that stretch reads KRRIRRERNKQAAARCRKRR. The leucine-zipper stretch occupies residues 485–513; sequence LTEEVELLEKRGENLKKEMELLNETKNQL. A compositionally biased stretch (low complexity) spans 550–571; it reads GSCGSGSSHHNNNSNSNDSSSG. 2 disordered regions span residues 550–594 and 756–778; these read GSCG…DLKP and TSQN…LVSL. Polar residues predominate over residues 579–589; the sequence is TLNSTGRSNSP. Residue S588 is modified to Phosphoserine.

This sequence belongs to the bZIP family. Fos subfamily. Homodimer. Heterodimer with Jra. The kay-Jra heterodimer binds more stably to the AP-1 site than either of the two proteins alone.

Its subcellular location is the nucleus. Functionally, developmentally regulated transcription factor AP-1 binds and recognizes the enhancer DNA sequence: 5'-TGA[CG]TCA-3'. May play a role in the function or determination of a particular subset of cells in the developing embryo. It is able to carry out its function either independently of or in conjunction with Jra. In Drosophila pseudoobscura pseudoobscura (Fruit fly), this protein is Transcription factor kayak.